The chain runs to 332 residues: Methionine synthase (332 aa).

3 residues coordinate Zn(2+): H211, C213, and C296.

Belongs to the archaeal MetE family. Zn(2+) is required as a cofactor.

The protein operates within amino-acid biosynthesis; L-methionine biosynthesis via de novo pathway. Functionally, catalyzes the transfer of a methyl group to L-homocysteine resulting in methionine formation. The physiological methyl donor is unknown. This chain is Methionine synthase, found in Saccharolobus solfataricus (strain ATCC 35092 / DSM 1617 / JCM 11322 / P2) (Sulfolobus solfataricus).